Reading from the N-terminus, the 255-residue chain is H-2 class II histocompatibility antigen, E-K alpha chain (255 aa).

A signal peptide spans M1 to A25. Residues I26–N109 form an alpha-1 region. The Extracellular portion of the chain corresponds to I26–E216. The tract at residues V110–W203 is alpha-2. An Ig-like C1-type domain is found at P112–E204. Residues C132 and C188 are joined by a disulfide bond. N143 is a glycosylation site (N-linked (GlcNAc...) asparagine). A connecting peptide region spans residues E204–E216. Residues N217–I242 traverse the membrane as a helical segment. Residues K243–L255 lie on the Cytoplasmic side of the membrane.

This sequence belongs to the MHC class II family.

The protein resides in the membrane. In Mus musculus (Mouse), this protein is H-2 class II histocompatibility antigen, E-K alpha chain.